We begin with the raw amino-acid sequence, 1417 residues long: DExH-box ATP-dependent RNA helicase DExH4, chloroplastic (1417 aa).

A compositionally biased stretch (basic residues) spans 1–12 (MAPTKKPQKNKQ). The tract at residues 1–37 (MAPTKKPQKNKQSKNEIASSLIPNSGHKKPSKAPKLL) is disordered. The N-terminal 61 residues, 1–61 (MAPTKKPQKN…NFRRTPSPVT (61 aa)), are a transit peptide targeting the chloroplast. A Helicase ATP-binding domain is found at 607–781 (LQKLKEKDVL…FGQCPIITAQ (175 aa)). An ATP-binding site is contributed by 620-627 (GETGSGKT). The DEIH box motif lies at 722–725 (DEVH). A Helicase C-terminal domain is found at 868-1043 (LLEELICHID…ELCLHIKLLG (176 aa)).

The protein belongs to the DExH box helicase family.

It localises to the plastid. It is found in the chloroplast. The catalysed reaction is ATP + H2O = ADP + phosphate + H(+). In Arabidopsis thaliana (Mouse-ear cress), this protein is DExH-box ATP-dependent RNA helicase DExH4, chloroplastic.